Reading from the N-terminus, the 1051-residue chain is Carbamoyl phosphate synthase large chain (1051 aa).

The carboxyphosphate synthetic domain stretch occupies residues 1-399 (MKETPKKVLV…SLQKAVRMLD (399 aa)). 12 residues coordinate ATP: Arg127, Arg167, Gly173, Gly174, Lys206, Leu208, Glu213, Gly239, Val240, His241, Gln282, and Glu296. Residues 131 to 325 (RETMIENNLP…LAYVSAKLAL (195 aa)) form the ATP-grasp 1 domain. 3 residues coordinate Mg(2+): Gln282, Glu296, and Asn298. Mn(2+)-binding residues include Gln282, Glu296, and Asn298. An oligomerization domain region spans residues 400–548 (IGEPGVVGGK…LTYNGTEDDL (149 aa)). Residues 549 to 930 (EFSQGNKLLM…LKSWLSSIPN (382 aa)) are carbamoyl phosphate synthetic domain. The ATP-grasp 2 domain occupies 673–863 (SKLLDKLGIS…LINESMKAIF (191 aa)). Residues Arg709, Lys748, Ile750, Glu755, Gly779, Val780, His781, Ser782, Gln822, and Glu834 each coordinate ATP. Mg(2+) contacts are provided by Gln822, Glu834, and Asn836. Positions 822, 834, and 836 each coordinate Mn(2+). The MGS-like domain maps to 930 to 1051 (NRIPNKNGIA…FEISEYGGGI (122 aa)). The interval 931–1051 (RIPNKNGIAL…FEISEYGGGI (121 aa)) is allosteric domain.

The protein belongs to the CarB family. As to quaternary structure, composed of two chains; the small (or glutamine) chain promotes the hydrolysis of glutamine to ammonia, which is used by the large (or ammonia) chain to synthesize carbamoyl phosphate. Tetramer of heterodimers (alpha,beta)4. Mg(2+) is required as a cofactor. Mn(2+) serves as cofactor.

The catalysed reaction is hydrogencarbonate + L-glutamine + 2 ATP + H2O = carbamoyl phosphate + L-glutamate + 2 ADP + phosphate + 2 H(+). The enzyme catalyses hydrogencarbonate + NH4(+) + 2 ATP = carbamoyl phosphate + 2 ADP + phosphate + 2 H(+). Its pathway is amino-acid biosynthesis; L-arginine biosynthesis; carbamoyl phosphate from bicarbonate: step 1/1. It participates in pyrimidine metabolism; UMP biosynthesis via de novo pathway; (S)-dihydroorotate from bicarbonate: step 1/3. Functionally, large subunit of the glutamine-dependent carbamoyl phosphate synthetase (CPSase). CPSase catalyzes the formation of carbamoyl phosphate from the ammonia moiety of glutamine, carbonate, and phosphate donated by ATP, constituting the first step of 2 biosynthetic pathways, one leading to arginine and/or urea and the other to pyrimidine nucleotides. The large subunit (synthetase) binds the substrates ammonia (free or transferred from glutamine from the small subunit), hydrogencarbonate and ATP and carries out an ATP-coupled ligase reaction, activating hydrogencarbonate by forming carboxy phosphate which reacts with ammonia to form carbamoyl phosphate. The chain is Carbamoyl phosphate synthase large chain from Saccharolobus islandicus (strain M.16.4 / Kamchatka #3) (Sulfolobus islandicus).